A 900-amino-acid chain; its full sequence is Chromodomain-helicase-DNA-binding protein 1-like (900 aa).

One can recognise a Helicase ATP-binding domain in the interval 52–217; sequence VQCFHCQNGC…YSLLCVVEPD (166 aa). Residue 65–72 coordinates ATP; that stretch reads DEMGLGKT. The short motif at 168-171 is the DEAH box element; sequence DEAH. Residues 345 to 507 enclose the Helicase C-terminal domain; that stretch reads LLDRLLAFLY…QKPSAEADFQ (163 aa). S534 is modified (phosphoserine). The tract at residues 546–569 is disordered; it reads PDALPAAAAAGGGSLEPEEGSELE. Residues 606 to 640 are regulatory linker segment (RLS); sequence TLLEKTSHGGRTLRNKGSVLIPGLAEGPIKRKKIL. Residues S612, S623, and S641 each carry the phosphoserine modification. A required for ATPase activity region spans residues 620 to 678; the sequence is NKGSVLIPGLAEGPIKRKKILSPEELEDRRKKRQEAAAKRKRLMEEKRKEKEEAEHRKK. The segment at 641–673 is disordered; that stretch reads SPEELEDRRKKRQEAAAKRKRLMEEKRKEKEEA. Positions 643–680 form a coiled coil; that stretch reads EELEDRRKKRQEAAAKRKRLMEEKRKEKEEAEHRKKMA. Residues 653–673 show a composition bias toward basic and acidic residues; it reads QEAAAKRKRLMEEKRKEKEEA. The 192-residue stretch at 709–900 folds into the Macro domain; it reads SAELAYEDLD…ASSSSAPLVP (192 aa). A Phosphoserine modification is found at S894.

It belongs to the SNF2/RAD54 helicase family. In terms of assembly, interacts with nucleosomes; interacts with the acidic patch of histones. Interacts (via macro domain) with PARP1; interacts only when PARP1 is poly-ADP-ribosylated (PARylated). Interacts with CIAO1.

The protein resides in the nucleus. It localises to the chromosome. The enzyme catalyses ATP + H2O = ADP + phosphate + H(+). Adopts an inactive conformation in absence of DNA damage. Binding to poly-ADP-ribosylated histones activates the ATP-dependent chromatin remodeler activity. Its function is as follows. ATP-dependent chromatin remodeler that mediates chromatin-remodeling following DNA damage. Recruited to DNA damage sites through interaction with poly-ADP-ribose: specifically recognizes and binds histones that are poly-ADP-ribosylated on serine residues in response to DNA damage. Poly-ADP-ribose-binding activates the ATP-dependent chromatin remodeler activity, thereby regulating chromatin during DNA repair. Catalyzes nucleosome sliding away from DNA breaks in an ATP-dependent manner. Chromatin remodeling activity promotes PARP2 removal from chromatin. The chain is Chromodomain-helicase-DNA-binding protein 1-like (Chd1l) from Mus musculus (Mouse).